Here is an 89-residue protein sequence, read N- to C-terminus: Bombyxin B-2 (89 aa).

An N-terminal signal peptide occupies residues Met1 to Ser19. 3 cysteine pairs are disulfide-bonded: Cys29–Cys75, Cys41–Cys88, and Cys74–Cys79. Positions Ser48–Gly66 are cleaved as a propeptide — c peptide like.

This sequence belongs to the insulin family. In terms of assembly, heterodimer of a B chain and an A chain linked by two disulfide bonds.

It localises to the secreted. Functionally, brain peptide responsible for activation of prothoracic glands to produce ecdysone in insects. The sequence is that of Bombyxin B-2 (BBXB2) from Bombyx mori (Silk moth).